Consider the following 248-residue polypeptide: MAGHSKWANIKHRKASQDAKRGKIFTKLIREITVAAKNGALPEDNPRLRAVIDKALTVNMKKDTIEKAIQRGAGGGDDSNFDELTYEGYGPGGVAVYVEVMTDNRNRTVAEVRHAFSKHGGNLGTDGSVAYLFSKTGVILFAPDVDEDAVMEAALEAGAQDVIANDDGSVEVQTSAEDFMAVKDALMAAGLTPESADVSMVPATMAPLDVENGEKVMKLIEMLEDLDDVQNVYSNADIPDEVLESMGG.

The protein belongs to the TACO1 family.

It localises to the cytoplasm. This Hahella chejuensis (strain KCTC 2396) protein is Probable transcriptional regulatory protein HCH_04926.